A 370-amino-acid polypeptide reads, in one-letter code: E3 ubiquitin-protein ligase E3D (370 aa).

Position 2 is an N-acetylalanine (Ala-2). The short motif at 129-159 (PLPSENWSALVGEWCCHPDPFANKPLHPREN) is the BRAT1-like motif element. Cys-144 contributes to the Zn(2+) binding site. Residues 214 to 236 (QPSEGSFPNIPRSQFVQSVIARC) are interaction with UBE2C. Positions 332-368 (LPSTTCLELLLILSRNNASLPLSLRQMNSFQLWCSHC) are HECT-like.

As to quaternary structure, interacts with UBE2C/UbcH10 (E2 ubiquitin-conjugating enzyme). In vitro, interacts with cyclin-B. Ubiquitinated by UBCH10 (E2 ubiquitin-conjugating enzyme).

The protein resides in the cytoplasm. It carries out the reaction S-ubiquitinyl-[E2 ubiquitin-conjugating enzyme]-L-cysteine + [acceptor protein]-L-lysine = [E2 ubiquitin-conjugating enzyme]-L-cysteine + N(6)-ubiquitinyl-[acceptor protein]-L-lysine.. Its pathway is protein modification; protein ubiquitination. In terms of biological role, E3 ubiquitin-protein ligase which accepts ubiquitin from specific E2 ubiquitin-conjugating enzymes, and transfers it to substrates, generally promoting their degradation by the proteasome. Independently of its E3 ubiquitin-protein ligase activity, acts as an inhibitor of CPSF3 endonuclease activity by blocking CPSF3 active site. The polypeptide is E3 ubiquitin-protein ligase E3D (Ube3d) (Rattus norvegicus (Rat)).